The sequence spans 521 residues: Caspase-10 (521 aa).

Residues 1–219 constitute a propeptide that is removed on maturation; the sequence is MKSQGQHWYS…GEEELVSQTD (219 aa). 2 DED domains span residues 19–97 and 114–187; these read SFRE…HLNC and LFRN…NIEK. 2 stretches are compositionally biased toward polar residues: residues 231 to 248 and 259 to 268; these read SWQN…TNGA and ASANTLNSET. A disordered region spans residues 231-269; sequence SWQNKHAGSNGNRATNGAPSLVSRGMQGASANTLNSETS. Active-site residues include H358 and C401.

Belongs to the peptidase C14A family. As to quaternary structure, heterotetramer that consists of two anti-parallel arranged heterodimers, each one formed by a 23/17 kDa (p23/17) (depending on the splicing events) and a 12 kDa (p12) subunit. Self-associates. Interacts with FADD and CASP8. Found in a Fas signaling complex consisting of FAS, FADD, CASP8 and CASP10. Interacts with RFFL and RNF34; negatively regulate CASP10 through proteasomal degradation. Interacts with RIOK3. In terms of processing, cleavage by granzyme B and autocatalytic activity generate the two active subunits. As to expression, detectable in most tissues. Lowest expression is seen in brain, kidney, prostate, testis and colon.

The enzyme catalyses Strict requirement for Asp at position P1 and has a preferred cleavage sequence of Leu-Gln-Thr-Asp-|-Gly.. Involved in the activation cascade of caspases responsible for apoptosis execution. Recruited to both Fas- and TNFR-1 receptors in a FADD dependent manner. May participate in the granzyme B apoptotic pathways. Cleaves and activates effector caspases CASP3, CASP4, CASP6, CASP7, CASP8 and CASP9. Hydrolyzes the small- molecule substrates, Tyr-Val-Ala-Asp-|-AMC and Asp-Glu-Val-Asp-|-AMC. Its function is as follows. Isoform 7 can enhance NF-kappaB activity but promotes only slight apoptosis. In terms of biological role, isoform C is proteolytically inactive. This Homo sapiens (Human) protein is Caspase-10 (CASP10).